Here is a 340-residue protein sequence, read N- to C-terminus: Pseudaminic acid synthase (340 aa).

The region spanning 281–337 (SLFVIKDIQKGEALTENNIKALRPNLGLHPKFYKEILGQKASKFLKANTPLSADDIE) is the AFP-like domain.

The protein belongs to the pseudaminic acid synthase family. The cofactor is a divalent metal cation.

The enzyme catalyses 2,4-diacetamido-2,4,6-trideoxy-beta-L-altrose + phosphoenolpyruvate + H2O = pseudaminate + phosphate. Functionally, catalyzes the fifth step in the biosynthesis of pseudaminic acid, a sialic-acid-like sugar that is used to modify flagellin. Catalyzes the condensation of phosphoenolpyruvate with 2,4-diacetamido-2,4,6-trideoxy-beta-l-altropyranose, forming pseudaminic acid. This chain is Pseudaminic acid synthase (pseI), found in Helicobacter pylori (strain ATCC 700392 / 26695) (Campylobacter pylori).